Consider the following 624-residue polypeptide: (-)-beta-phellandrene synthase 4, chloroplastic (624 aa).

The transit peptide at 1–48 (MAIVSSVPLASKSCLHKSLISSIHKLKPFCRTIPTLGMSRPGKSVMPS) directs the protein to the chloroplast. The disordered stretch occupies residues 41–60 (PGKSVMPSMSMSSPVSDDGV). Low complexity predominate over residues 44-56 (SVMPSMSMSSPVS). Mg(2+)-binding residues include D375, D379, and D527. The DDXXD motif signature appears at 375 to 379 (DDMYD).

Belongs to the terpene synthase family. Tpsd subfamily. It depends on Mg(2+) as a cofactor. Mn(2+) is required as a cofactor.

Its subcellular location is the plastid. It is found in the chloroplast. The enzyme catalyses (2E)-geranyl diphosphate = (-)-beta-phellandrene + diphosphate. Its pathway is terpene metabolism; oleoresin biosynthesis. Terpene synthase (TPS) involved in the biosynthesis of monoterpene natural products included in conifer oleoresin secretions and volatile emissions; these compounds contribute to biotic and abiotic stress defense against herbivores and pathogens. Catalyzes the conversion of (2E)-geranyl diphosphate (GPP) to (-)-beta-phellandrene. The polypeptide is (-)-beta-phellandrene synthase 4, chloroplastic (Picea sitchensis (Sitka spruce)).